A 238-amino-acid chain; its full sequence is MRPSGRQPQEMRTVSFEPGVAKHAEGSCLVRFGDTHVLCTASLEERVPPFLKGGGQGWVTAEYGMLPRSTHERMRREAAQGKQSGRTQEIQRLVGRSLRSVVDLKALGERQISVDCDVLQADGGTRTASITGAWVALHQCIEWMRARSMISAPVLKDHVAAISCGIYQGVPVVDLDYAEDSTADTDANFVITGKGGICEIQGTAEGEPFSDEEFLSLLALAKTSIADLVRRQKEAVSA.

Residues R86 and 124 to 126 (GTR) each bind phosphate.

The protein belongs to the RNase PH family. Homohexameric ring arranged as a trimer of dimers.

The catalysed reaction is tRNA(n+1) + phosphate = tRNA(n) + a ribonucleoside 5'-diphosphate. In terms of biological role, phosphorolytic 3'-5' exoribonuclease that plays an important role in tRNA 3'-end maturation. Removes nucleotide residues following the 3'-CCA terminus of tRNAs; can also add nucleotides to the ends of RNA molecules by using nucleoside diphosphates as substrates, but this may not be physiologically important. Probably plays a role in initiation of 16S rRNA degradation (leading to ribosome degradation) during starvation. The protein is Ribonuclease PH of Parvibaculum lavamentivorans (strain DS-1 / DSM 13023 / NCIMB 13966).